The chain runs to 323 residues: Leucine-rich repeat-containing protein 46 (323 aa).

LRR repeat units lie at residues 49–70, 71–92, 93–114, and 115–135; these read ELETVRLDGEGITCIGNLEKLR, NIHSLYLQSNKIQRIENLACIT, SLRFLSLARNQIRHVENLLDLQ, and YLQFLDLSENLIETLKLDELP. In terms of domain architecture, LRRCT spans 146–188; the sequence is NPCTNQEGYRKMVIGALPLLLDLDKQPILERWTSDEEDKSSDD. Phosphothreonine is present on T178. 3 positions are modified to phosphoserine: S179, S185, and S186. Residues 203 to 228 are a coiled coil; sequence RGFFKDLEQELHQHQERRQQAALTEH. A disordered region spans residues 249 to 323; that stretch reads MAGDCSSTAT…TKMTNKKSTK (75 aa). The segment covering 267–316 has biased composition (low complexity); sequence PKATSSTQTASTTKKQVSKNQKSSVQARKGALAATTSKTSQAATPSMTKM. Phosphoserine is present on S303.

In terms of tissue distribution, testis-specific (at protein level).

It localises to the cell projection. Its subcellular location is the cilium. The protein resides in the flagellum. Functionally, required for normal spermatogenesis and male fertility. Plays an important role in sperm flagellum biogenesis. The chain is Leucine-rich repeat-containing protein 46 (Lrrc46) from Mus musculus (Mouse).